The sequence spans 440 residues: GTPase Der (440 aa).

2 EngA-type G domains span residues 4–169 (PVVA…PEED) and 178–353 (IKVA…DQAA). Residues 10–17 (GRPNVGKS), 57–61 (DTGGI), 120–123 (NKVD), 184–191 (GKPNVGKS), 231–235 (DTAGI), and 296–299 (NKWD) each bind GTP. The KH-like domain occupies 354–438 (MRISTGVLND…PIKFILREKE (85 aa)).

It belongs to the TRAFAC class TrmE-Era-EngA-EngB-Septin-like GTPase superfamily. EngA (Der) GTPase family. As to quaternary structure, associates with the 50S ribosomal subunit.

In terms of biological role, GTPase that plays an essential role in the late steps of ribosome biogenesis. This is GTPase Der from Acetivibrio thermocellus (strain ATCC 27405 / DSM 1237 / JCM 9322 / NBRC 103400 / NCIMB 10682 / NRRL B-4536 / VPI 7372) (Clostridium thermocellum).